Consider the following 353-residue polypeptide: Photosystem II protein D1 (353 aa).

Thr-2 is subject to N-acetylthreonine. Thr-2 carries the post-translational modification Phosphothreonine. 3 helical membrane passes run 29–46 (YIGW…TATS), 118–133 (HFLL…EWEL), and 142–156 (WIAV…AATA). His-118 provides a ligand contact to chlorophyll a. Tyr-126 is a pheophytin a binding site. Positions 170 and 189 each coordinate [CaMn4O5] cluster. A helical membrane pass occupies residues 197 to 218 (FHMLGVAGVFGGSLFSAMHGSL). His-198 serves as a coordination point for chlorophyll a. Residues His-215 and 264–265 (SF) contribute to the a quinone site. His-215 contributes to the Fe cation binding site. His-272 provides a ligand contact to Fe cation. A helical transmembrane segment spans residues 274–288 (FLAAWPVAGIWFTAL). 4 residues coordinate [CaMn4O5] cluster: His-332, Glu-333, Asp-342, and Ala-344. The propeptide occupies 345–353 (AVESISIGG).

This sequence belongs to the reaction center PufL/M/PsbA/D family. As to quaternary structure, PSII is composed of 1 copy each of membrane proteins PsbA, PsbB, PsbC, PsbD, PsbE, PsbF, PsbH, PsbI, PsbJ, PsbK, PsbL, PsbM, PsbT, PsbX, PsbY, PsbZ, Psb30/Ycf12, at least 3 peripheral proteins of the oxygen-evolving complex and a large number of cofactors. It forms dimeric complexes. The D1/D2 heterodimer binds P680, chlorophylls that are the primary electron donor of PSII, and subsequent electron acceptors. It shares a non-heme iron and each subunit binds pheophytin, quinone, additional chlorophylls, carotenoids and lipids. D1 provides most of the ligands for the Mn4-Ca-O5 cluster of the oxygen-evolving complex (OEC). There is also a Cl(-1) ion associated with D1 and D2, which is required for oxygen evolution. The PSII complex binds additional chlorophylls, carotenoids and specific lipids. is required as a cofactor. Tyr-161 forms a radical intermediate that is referred to as redox-active TyrZ, YZ or Y-Z. Post-translationally, C-terminally processed by CTPA; processing is essential to allow assembly of the oxygen-evolving complex and thus photosynthetic growth.

The protein resides in the plastid. It localises to the chloroplast thylakoid membrane. The enzyme catalyses 2 a plastoquinone + 4 hnu + 2 H2O = 2 a plastoquinol + O2. Its function is as follows. Photosystem II (PSII) is a light-driven water:plastoquinone oxidoreductase that uses light energy to abstract electrons from H(2)O, generating O(2) and a proton gradient subsequently used for ATP formation. It consists of a core antenna complex that captures photons, and an electron transfer chain that converts photonic excitation into a charge separation. The D1/D2 (PsbA/PsbD) reaction center heterodimer binds P680, the primary electron donor of PSII as well as several subsequent electron acceptors. The polypeptide is Photosystem II protein D1 (Pinus koraiensis (Korean pine)).